A 101-amino-acid chain; its full sequence is Small ribosomal subunit protein uS14 (101 aa).

Belongs to the universal ribosomal protein uS14 family. As to quaternary structure, part of the 30S ribosomal subunit. Contacts proteins S3 and S10.

Its function is as follows. Binds 16S rRNA, required for the assembly of 30S particles and may also be responsible for determining the conformation of the 16S rRNA at the A site. The chain is Small ribosomal subunit protein uS14 from Psychrobacter arcticus (strain DSM 17307 / VKM B-2377 / 273-4).